A 250-amino-acid chain; its full sequence is Triosephosphate isomerase (250 aa).

9–11 (NWK) is a binding site for substrate. Catalysis depends on H96, which acts as the Electrophile. E166 functions as the Proton acceptor in the catalytic mechanism. Substrate is bound by residues G172, S212, and 233–234 (GG).

This sequence belongs to the triosephosphate isomerase family. Homodimer.

The protein localises to the cytoplasm. The catalysed reaction is D-glyceraldehyde 3-phosphate = dihydroxyacetone phosphate. The protein operates within carbohydrate biosynthesis; gluconeogenesis. It functions in the pathway carbohydrate degradation; glycolysis; D-glyceraldehyde 3-phosphate from glycerone phosphate: step 1/1. Functionally, involved in the gluconeogenesis. Catalyzes stereospecifically the conversion of dihydroxyacetone phosphate (DHAP) to D-glyceraldehyde-3-phosphate (G3P). The polypeptide is Triosephosphate isomerase (Chlorobium luteolum (strain DSM 273 / BCRC 81028 / 2530) (Pelodictyon luteolum)).